Here is an 82-residue protein sequence, read N- to C-terminus: Exodeoxyribonuclease 7 small subunit (82 aa).

The protein belongs to the XseB family. As to quaternary structure, heterooligomer composed of large and small subunits.

The protein resides in the cytoplasm. It catalyses the reaction Exonucleolytic cleavage in either 5'- to 3'- or 3'- to 5'-direction to yield nucleoside 5'-phosphates.. Bidirectionally degrades single-stranded DNA into large acid-insoluble oligonucleotides, which are then degraded further into small acid-soluble oligonucleotides. This is Exodeoxyribonuclease 7 small subunit from Mycobacterium avium (strain 104).